A 59-amino-acid chain; its full sequence is Antibacterial peptide enbocin (59 aa).

A signal peptide spans 1–20; it reads MNFTRIIFFLFVVVFATASG. A propeptide is located at residue lysine 21. The residue at position 58 (serine 58) is a Serine amide.

This sequence belongs to the cecropin family.

The protein localises to the secreted. Functionally, has antibacterial activity against Gram-positive and Gram-negative bacteria. The protein is Antibacterial peptide enbocin of Bombyx mori (Silk moth).